A 139-amino-acid chain; its full sequence is MRLTQGAFSFLPDLTDEQIVKQIQYAISKNWALNVEWTDDPHPRNAYWDLWGLPLFGIKDPAAVMFEINACRKAKPACYVKVNAFDNSRGVESCCLSFIVQRPTSNEPGFQLIRSEVDSRNIRYTIQSYASTRPEGERY.

Belongs to the RuBisCO small chain family. As to quaternary structure, heterohexadecamer of 8 large and 8 small subunits.

Its subcellular location is the plastid. It is found in the chloroplast. In terms of biological role, ruBisCO catalyzes two reactions: the carboxylation of D-ribulose 1,5-bisphosphate, the primary event in carbon dioxide fixation, as well as the oxidative fragmentation of the pentose substrate in the photorespiration process. Both reactions occur simultaneously and in competition at the same active site. Although the small subunit is not catalytic it is essential for maximal activity. The polypeptide is Ribulose bisphosphate carboxylase small subunit (Guillardia theta (Cryptophyte)).